The following is a 213-amino-acid chain: Orotate phosphoribosyltransferase (213 aa).

Lys-26 lines the 5-phospho-alpha-D-ribose 1-diphosphate pocket. 34-35 (FF) serves as a coordination point for orotate. 5-phospho-alpha-D-ribose 1-diphosphate is bound by residues 72–73 (YK), Arg-99, Lys-100, Lys-103, His-105, and 124–132 (DDVITAGTA). Orotate-binding residues include Thr-128 and Arg-156.

Belongs to the purine/pyrimidine phosphoribosyltransferase family. PyrE subfamily. In terms of assembly, homodimer. Requires Mg(2+) as cofactor.

It carries out the reaction orotidine 5'-phosphate + diphosphate = orotate + 5-phospho-alpha-D-ribose 1-diphosphate. It functions in the pathway pyrimidine metabolism; UMP biosynthesis via de novo pathway; UMP from orotate: step 1/2. In terms of biological role, catalyzes the transfer of a ribosyl phosphate group from 5-phosphoribose 1-diphosphate to orotate, leading to the formation of orotidine monophosphate (OMP). The protein is Orotate phosphoribosyltransferase of Escherichia coli O139:H28 (strain E24377A / ETEC).